The sequence spans 132 residues: UPF0299 membrane protein YohJ (132 aa).

A run of 4 helical transmembrane segments spans residues 7–27 (IIWQ…AGIF), 31–51 (LLPI…VLLA), 63–83 (GCYV…VGVM), and 93–113 (FGPV…VVSW).

It belongs to the UPF0299 family.

It localises to the cell inner membrane. The chain is UPF0299 membrane protein YohJ from Salmonella arizonae (strain ATCC BAA-731 / CDC346-86 / RSK2980).